The chain runs to 148 residues: Snaclec 8 (148 aa).

Residues 1-23 (MGRFIFVSFSLLVVFFSLSGTEA) form the signal peptide. One can recognise a C-type lectin domain in the interval 34-148 (YDQNCYKAFE…DTQFRLQEPG (115 aa)).

The protein belongs to the snaclec family. Heterodimer; disulfide-linked. Post-translationally, contains disulfide bonds. Expressed by the venom gland.

The protein localises to the secreted. In terms of biological role, interferes with one step of hemostasis (modulation of platelet aggregation, or coagulation cascade, for example). The protein is Snaclec 8 of Echis carinatus sochureki (Saw-scaled viper).